The primary structure comprises 313 residues: Olfactory receptor 4E2 (313 aa).

Residues 1–25 (MDSLNQTRVTEFVFLGLTDNRVLEM) are Extracellular-facing. Asparagine 5 carries an N-linked (GlcNAc...) asparagine glycan. Residues 26–49 (LFFMAFSAIYMLTLSGNILIIIAT) form a helical membrane-spanning segment. Residues 50–57 (VFTPSLHT) are Cytoplasmic-facing. A helical membrane pass occupies residues 58-79 (PMYFFLSNLSFIDICHSSVTVP). Topologically, residues 80–100 (KMLEGLLLERKTISFDNCITQ) are extracellular. Residues cysteine 97 and cysteine 179 are joined by a disulfide bond. A helical transmembrane segment spans residues 101–120 (LFFLHLFACAEIFLLIIVAY). Cu cation contacts are provided by histidine 105 and cysteine 109. The Cytoplasmic portion of the chain corresponds to 121–139 (DRYVAICTPLHYPNVMNMR). Residues 140–158 (VCIQLVFALWLGGTVHSLG) traverse the membrane as a helical segment. The Extracellular portion of the chain corresponds to 159 to 195 (QTFLTIRLPYCGPNIIDSYFCDVPLVIKLACTDTYLT). The chain crosses the membrane as a helical span at residues 196–219 (GILIVTNSGTISLSCFLAVVTSYM). At 220-235 (VILVSLRKHSAEGRQK) the chain is on the cytoplasmic side. The helical transmembrane segment at 236–258 (ALSTCSAHFMVVALFFGPCIFIY) threads the bilayer. Residues 259–269 (TRPDTSFSIDK) lie on the Extracellular side of the membrane. A Cu cation-binding site is contributed by arginine 260. The helical transmembrane segment at 270-289 (VVSVFYTVVTPLLNPFIYTL) threads the bilayer. Over 290-313 (RNEEVKSAMKQLRQRQVFFTKSYT) the chain is Cytoplasmic.

The protein belongs to the G-protein coupled receptor 1 family.

It localises to the cell membrane. Its activity is regulated as follows. Copper binding enhances receptor activity in response to odorant binding. In terms of biological role, olfactory receptor that is activated by the binding of organosulfur odorants with thioether groups such as (methylthio)methanethiol (MTMT) and bis(methylthiomethyl) disulfide. Also binds odorants cis-cyclooctene and tert-butyl mercaptan. The activity of this receptor is mediated by G proteins which activate adenylyl cyclase. This chain is Olfactory receptor 4E2, found in Homo sapiens (Human).